Consider the following 294-residue polypeptide: Bifunctional protein FolD (294 aa).

NADP(+) is bound by residues 176–178 (GAS), serine 201, and isoleucine 242.

Belongs to the tetrahydrofolate dehydrogenase/cyclohydrolase family. As to quaternary structure, homodimer.

The enzyme catalyses (6R)-5,10-methylene-5,6,7,8-tetrahydrofolate + NADP(+) = (6R)-5,10-methenyltetrahydrofolate + NADPH. The catalysed reaction is (6R)-5,10-methenyltetrahydrofolate + H2O = (6R)-10-formyltetrahydrofolate + H(+). The protein operates within one-carbon metabolism; tetrahydrofolate interconversion. Its function is as follows. Catalyzes the oxidation of 5,10-methylenetetrahydrofolate to 5,10-methenyltetrahydrofolate and then the hydrolysis of 5,10-methenyltetrahydrofolate to 10-formyltetrahydrofolate. The sequence is that of Bifunctional protein FolD from Bordetella petrii (strain ATCC BAA-461 / DSM 12804 / CCUG 43448).